A 503-amino-acid chain; its full sequence is Activin receptor type-1-like (503 aa).

The first 21 residues, 1-21 (MTLGSPRKGLLMLLMALVTQG), serve as a signal peptide directing secretion. The Extracellular portion of the chain corresponds to 22 to 118 (DPVKPSRGPL…PSEQPGTDGQ (97 aa)). Cystine bridges form between Cys-34–Cys-51, Cys-36–Cys-41, and Cys-46–Cys-69. Residues 73 to 76 (HREL) form a mediates specificity for BMP ligand region. Disulfide bonds link Cys-77/Cys-89 and Cys-90/Cys-95. Asn-98 is a glycosylation site (N-linked (GlcNAc...) asparagine). Residues 119-141 (LALILGPVLALLALVALGVLGLW) traverse the membrane as a helical segment. Topologically, residues 142–503 (HVRRRQEKQR…NSPEKPKVIQ (362 aa)) are cytoplasmic. Phosphoserine occurs at positions 155, 160, and 161. A GS domain is found at 172–201 (SMLGDLLDSDCTTGSGSGLPFLVQRTVARQ). The region spanning 202 to 492 (VALVECVGKG…LRIKKTLQKI (291 aa)) is the Protein kinase domain. Residues 208 to 216 (VGKGRYGEV) and Lys-229 each bind ATP. Asp-330 (proton acceptor) is an active-site residue.

This sequence belongs to the protein kinase superfamily. TKL Ser/Thr protein kinase family. TGFB receptor subfamily. As to quaternary structure, interacts with TSC22D1/TSC-22. The cofactor is Mg(2+). It depends on Mn(2+) as a cofactor.

It is found in the cell membrane. The catalysed reaction is L-threonyl-[receptor-protein] + ATP = O-phospho-L-threonyl-[receptor-protein] + ADP + H(+). It carries out the reaction L-seryl-[receptor-protein] + ATP = O-phospho-L-seryl-[receptor-protein] + ADP + H(+). In terms of biological role, type I receptor for TGF-beta family ligands BMP9/GDF2 and BMP10 and important regulator of normal blood vessel development. On ligand binding, forms a receptor complex consisting of two type II and two type I transmembrane serine/threonine kinases. Type II receptors phosphorylate and activate type I receptors which autophosphorylate, then bind and activate SMAD transcriptional regulators. May bind activin as well. The chain is Activin receptor type-1-like (ACVRL1) from Homo sapiens (Human).